Here is a 103-residue protein sequence, read N- to C-terminus: Small ribosomal subunit protein uS10 (103 aa).

This sequence belongs to the universal ribosomal protein uS10 family. In terms of assembly, part of the 30S ribosomal subunit.

Involved in the binding of tRNA to the ribosomes. The chain is Small ribosomal subunit protein uS10 from Helicobacter hepaticus (strain ATCC 51449 / 3B1).